A 592-amino-acid polypeptide reads, in one-letter code: Bifunctional purine biosynthesis protein ATIC (592 aa).

Met1 carries the N-acetylmethionine modification. The MGS-like domain maps to 1–146; sequence MAPGHLALFS…KNHARVTVVC (146 aa). Positions 1–198 are IMP cyclohydrolase; the sequence is MAPGHLALFS…ISDYFRKQYS (198 aa). IMP contacts are provided by residues 12-14, 34-37, 64-67, 101-102, and 125-126; these read SDK, SGGT, RVKT, CN, and DI. The Proton donor/acceptor; for FAICAR cyclization activity role is filled by Lys137. Lys199 is modified (N6-acetyllysine). Positions 199 to 592 are AICAR formyltransferase; sequence KGISQMPLRY…AHTNLRLFHH (394 aa). Residues 207-208, His267, Gly316, Asp339, Asn431, and Arg451 each bind 5-amino-1-(5-phospho-beta-D-ribosyl)imidazole-4-carboxamide; that span reads RY. Catalysis depends on His267, which acts as the Proton acceptor; for AICAR formyltransferase activity. (6R)-10-formyltetrahydrofolate is bound at residue Ile452. Residue Phe541 participates in 5-amino-1-(5-phospho-beta-D-ribosyl)imidazole-4-carboxamide binding. (6R)-10-formyltetrahydrofolate contacts are provided by residues Asp546 and 565 to 566; that span reads SA. 5-amino-1-(5-phospho-beta-D-ribosyl)imidazole-4-carboxamide is bound at residue Arg588.

It belongs to the PurH family. As to quaternary structure, homodimer. Associates with internalized INSR complexes on Golgi/endosomal membranes. Interacts with INSR; ATIC together with PRKAA2/AMPK2 and HACD3/PTPLAD1 is proposed to be part of a signaling network regulating INSR autophosphorylation and endocytosis.

Its subcellular location is the cytoplasm. It localises to the cytosol. The enzyme catalyses (6R)-10-formyltetrahydrofolate + 5-amino-1-(5-phospho-beta-D-ribosyl)imidazole-4-carboxamide = 5-formamido-1-(5-phospho-D-ribosyl)imidazole-4-carboxamide + (6S)-5,6,7,8-tetrahydrofolate. It carries out the reaction 10-formyldihydrofolate + 5-amino-1-(5-phospho-beta-D-ribosyl)imidazole-4-carboxamide = 5-formamido-1-(5-phospho-D-ribosyl)imidazole-4-carboxamide + 7,8-dihydrofolate. It catalyses the reaction IMP + H2O = 5-formamido-1-(5-phospho-D-ribosyl)imidazole-4-carboxamide. It functions in the pathway purine metabolism; IMP biosynthesis via de novo pathway; 5-formamido-1-(5-phospho-D-ribosyl)imidazole-4-carboxamide from 5-amino-1-(5-phospho-D-ribosyl)imidazole-4-carboxamide (10-formyl THF route): step 1/1. It participates in purine metabolism; IMP biosynthesis via de novo pathway; IMP from 5-formamido-1-(5-phospho-D-ribosyl)imidazole-4-carboxamide: step 1/1. With respect to regulation, AMP and XMP inhibit AICAR formyltransferase activity. Bifunctional enzyme that catalyzes the last two steps of purine biosynthesis. Acts as a transformylase that incorporates a formyl group to the AMP analog AICAR (5-amino-1-(5-phospho-beta-D-ribosyl)imidazole-4-carboxamide) to produce the intermediate formyl-AICAR (FAICAR). Can use both 10-formyldihydrofolate and 10-formyltetrahydrofolate as the formyl donor in this reaction. Also catalyzes the cyclization of FAICAR to inosine monophosphate (IMP). Promotes insulin receptor/INSR autophosphorylation and is involved in INSR internalization. This chain is Bifunctional purine biosynthesis protein ATIC (ATIC), found in Pongo abelii (Sumatran orangutan).